Reading from the N-terminus, the 47-residue chain is Ruminococcin-A (47 aa).

An N-terminal signal peptide occupies residues 1–23; that stretch reads MRNDVLTLTNPMEENELEQILGG. 2,3-didehydrobutyrine occurs at positions 30 and 39. Residues 30 to 35 constitute a cross-link (beta-methyllanthionine (Thr-Cys)); sequence TISHEC. Positions 32-46 form a cross-link, lanthionine (Ser-Cys); that stretch reads SHECNMNTWQFLFTC. Positions 45–47 form a cross-link, beta-methyllanthionine (Thr-Cys); that stretch reads TCC.

It belongs to the type A lantibiotic family. In terms of processing, maturation of lantibiotics involves the enzymatic conversion of Thr, and Ser into dehydrated AA and the formation of thioether bonds with cysteine. This is followed by membrane translocation and cleavage of the modified precursor.

Its subcellular location is the secreted. In terms of biological role, lanthionine-containing peptide antibiotic (lantibiotic) active on Gram-positive bacteria. The bactericidal activity of lantibiotics is based on depolarization of energized bacterial cytoplasmic membranes, initiated by the formation of aqueous transmembrane pores. Ruminococcin A is a broad spectrum bacteriocin exhibiting activity against a wide range of pathogenic clostridia and B.longum. In Blautia hansenii (Ruminococcus hansenii), this protein is Ruminococcin-A (rumA1).